A 583-amino-acid polypeptide reads, in one-letter code: COP9 signalosome complex subunit 10 (583 aa).

Over residues 1–35 (MSDEEDYAEYMMSEEDMSSFEMDVDSDVEPDDAGL) the composition is skewed to acidic residues. The segment at 1 to 55 (MSDEEDYAEYMMSEEDMSSFEMDVDSDVEPDDAGLEQDQQVTGDDYDGSAGNSGD) is disordered. The 189-residue stretch at 297–485 (DHYNQSQMLS…DYVYFGEEYF (189 aa)) folds into the PCI domain.

Component of a COP9 signalosome-like (CSN) complex.

It localises to the cytoplasm. The protein resides in the nucleus. In terms of biological role, component of the COP9 signalosome (CSN) complex that acts as an regulator of the ubiquitin (Ubl) conjugation pathway by mediating the deneddylation of the cullin subunit of SCF-type E3 ubiquitin-protein ligase complexes. The CSN complex is involved in the regulation of the mating pheromone response. This is COP9 signalosome complex subunit 10 (RRI2) from Kluyveromyces lactis (strain ATCC 8585 / CBS 2359 / DSM 70799 / NBRC 1267 / NRRL Y-1140 / WM37) (Yeast).